The primary structure comprises 536 residues: CTP synthase (536 aa).

Residues 1-267 form an amidoligase domain region; sequence MTKFIFVTGG…DDIVIKRLQL (267 aa). Residue serine 13 participates in CTP binding. Serine 13 provides a ligand contact to UTP. An ATP-binding site is contributed by 14 to 19; the sequence is SLGKGI. Tyrosine 54 provides a ligand contact to L-glutamine. Aspartate 71 provides a ligand contact to ATP. Mg(2+) contacts are provided by aspartate 71 and glutamate 141. CTP contacts are provided by residues 148–150, 188–193, and lysine 224; these read DIE and KTKPTQ. Residues 188-193 and lysine 224 contribute to the UTP site; that span reads KTKPTQ. 240 to 242 contacts ATP; the sequence is RDA. The region spanning 293–535 is the Glutamine amidotransferase type-1 domain; the sequence is TIGLVGKYVS…IEASLKYQQN (243 aa). Glycine 355 provides a ligand contact to L-glutamine. The Nucleophile; for glutamine hydrolysis role is filled by cysteine 382. L-glutamine is bound by residues 383 to 386, glutamate 406, and arginine 463; that span reads LGMQ. Residues histidine 508 and glutamate 510 contribute to the active site.

It belongs to the CTP synthase family. As to quaternary structure, homotetramer.

The enzyme catalyses UTP + L-glutamine + ATP + H2O = CTP + L-glutamate + ADP + phosphate + 2 H(+). The catalysed reaction is L-glutamine + H2O = L-glutamate + NH4(+). It carries out the reaction UTP + NH4(+) + ATP = CTP + ADP + phosphate + 2 H(+). It functions in the pathway pyrimidine metabolism; CTP biosynthesis via de novo pathway; CTP from UDP: step 2/2. Its activity is regulated as follows. Allosterically activated by GTP, when glutamine is the substrate; GTP has no effect on the reaction when ammonia is the substrate. The allosteric effector GTP functions by stabilizing the protein conformation that binds the tetrahedral intermediate(s) formed during glutamine hydrolysis. Inhibited by the product CTP, via allosteric rather than competitive inhibition. In terms of biological role, catalyzes the ATP-dependent amination of UTP to CTP with either L-glutamine or ammonia as the source of nitrogen. Regulates intracellular CTP levels through interactions with the four ribonucleotide triphosphates. The protein is CTP synthase of Staphylococcus aureus (strain NCTC 8325 / PS 47).